The primary structure comprises 270 residues: MTIKNEEQQQQTNKLKYPKNLLSSGLDGEGNTYINIEDLWKKELEGKDNKMEDKWYKSADEYWKGVEATVDGMLGGLAQVSPIDVVASKVFIQDFIKGTDSRPPINLNLALDCGAGIGRVAKEFLLPIGFKNVDLVEQNKLFLDKAKSDNFKDDNRVENYYAVGLQDFTFEKKYDCIWIQWVIGHLHDLDFIEFLKKCMDSLTPNGIICIKDNCAKKRFIMDKEDNSVSRTEDHLKYLFDQAGCKLLKSMVQPNFPKELFPVLMFALERK.

Residues Gly114, Arg119, 137 to 139 (EQN), 165 to 166 (LQ), and Gln180 contribute to the S-adenosyl-L-methionine site.

Belongs to the methyltransferase superfamily. NTM1 family.

The catalysed reaction is N-terminal L-alanyl-L-prolyl-L-lysyl-[protein] + 3 S-adenosyl-L-methionine = N-terminal N,N,N-trimethyl-L-alanyl-L-prolyl-L-lysyl-[protein] + 3 S-adenosyl-L-homocysteine + 3 H(+). It carries out the reaction N-terminal L-seryl-L-prolyl-L-lysyl-[protein] + 3 S-adenosyl-L-methionine = N-terminal N,N,N-trimethyl-L-seryl-L-prolyl-L-lysyl-[protein] + 3 S-adenosyl-L-homocysteine + 3 H(+). It catalyses the reaction N-terminal L-prolyl-L-prolyl-L-lysyl-[protein] + 2 S-adenosyl-L-methionine = N-terminal N,N-dimethyl-L-prolyl-L-prolyl-L-lysyl-[protein] + 2 S-adenosyl-L-homocysteine + 2 H(+). Functionally, alpha-N-methyltransferase that methylates the N-terminus of target proteins containing the N-terminal motif [Ala/Pro/Ser]-Pro-Lys when the initiator Met is cleaved. Specifically catalyzes mono-, di- or tri-methylation of exposed alpha-amino group of Ala or Ser residue in the [Ala/Ser]-Pro-Lys motif and mono- or di-methylation of Pro in the Pro-Pro-Lys motif. The chain is Alpha N-terminal protein methyltransferase 1 from Dictyostelium discoideum (Social amoeba).